A 105-amino-acid polypeptide reads, in one-letter code: uncharacterized protein (105 aa).

It belongs to the baculoviridae 11 kDa protein family.

This is an uncharacterized protein from Autographa californica nuclear polyhedrosis virus (AcMNPV).